The chain runs to 1333 residues: Inner capsid protein VP1 (1333 aa).

Positions 1-10 are enriched in low complexity; the sequence is MHSTNNNSNK. Positions 1 to 71 are disordered; it reads MHSTNNNSNK…QTDGTGLSGT (71 aa). A compositionally biased stretch (basic and acidic residues) spans 11-21; that stretch reads RNNEEKHKQPE. Polar residues predominate over residues 22–42; that stretch reads IDSSANNGEGTSGTRAQTVGD.

This sequence belongs to the turreted BTV-fold inner capsid family. Homodecamer; each decamer is made up of two conformers of VP2, called VP2A and VP2B. 12 homodecamers assemble to form an icosahedral capsid.

The protein resides in the virion. In terms of biological role, inner capsid protein that self-assembles to form an icosahedral capsid with a T=2 symmetry, which consists of 120 copies of VP2, with channels at each of its five-fold vertices. This capsid constitutes the innermost concentric layer of the viral mature particle. The protein is Inner capsid protein VP1 of Bombyx mori (Silk moth).